Here is a 191-residue protein sequence, read N- to C-terminus: Protein Ves (191 aa).

It belongs to the Ves family.

In Shigella flexneri, this protein is Protein Ves.